The chain runs to 71 residues: MDEEASRTARESLELVFRMSNILDTGLDRHTLSVLIALCDLGVNPEALATVVKELRRESIPDSVTTTPSIH.

Belongs to the MOZART1 family. As to quaternary structure, homo- and heteromultimer. Part of the gamma-tubulin complex. Interacts with TUBB2/TUBB3, GIP2, GCP3 and TSA1 (via C-terminal domain). In terms of tissue distribution, mostly expressed in siliques and flowers, and, to a lower extent, in leaves, roots and seedlings, with highest levels in young tissues and meristematic cells, and the vasculature.

The protein resides in the cytoplasm. It localises to the cytoskeleton. It is found in the microtubule organizing center. Its subcellular location is the spindle. The protein localises to the nucleus. The protein resides in the phragmoplast. It localises to the nucleus envelope. Its function is as follows. Required for gamma-tubulin complex recruitment to the microtubule organizing centers (MTOCs). During mitosis, modulates gamma-tubulin complex localization, spindle stability and chromosomal segregation. Necessary for gametophyte development and embryogenesis. This chain is Mitotic-spindle organizing protein 1B (GIP1), found in Arabidopsis thaliana (Mouse-ear cress).